A 345-amino-acid polypeptide reads, in one-letter code: GTPase Obg (345 aa).

The region spanning 1-159 (MRFIDEASIT…FHLKLELKLL (159 aa)) is the Obg domain. Residues 160-329 (ADVGIVGLPN…LIQILARQIA (170 aa)) form the OBG-type G domain. Residues 166–173 (GLPNAGKS), 191–195 (FTTLT), 213–216 (DIPG), 283–286 (NKID), and 310–312 (SAA) each bind GTP. 2 residues coordinate Mg(2+): S173 and T193.

Belongs to the TRAFAC class OBG-HflX-like GTPase superfamily. OBG GTPase family. In terms of assembly, monomer. Mg(2+) serves as cofactor.

It is found in the cytoplasm. Its function is as follows. An essential GTPase which binds GTP, GDP and possibly (p)ppGpp with moderate affinity, with high nucleotide exchange rates and a fairly low GTP hydrolysis rate. Plays a role in control of the cell cycle, stress response, ribosome biogenesis and in those bacteria that undergo differentiation, in morphogenesis control. This Desulforapulum autotrophicum (strain ATCC 43914 / DSM 3382 / VKM B-1955 / HRM2) (Desulfobacterium autotrophicum) protein is GTPase Obg.